A 360-amino-acid polypeptide reads, in one-letter code: Transcription elongation factor, mitochondrial (360 aa).

Residues 1–35 (MSGSVLFTAGERWRCFLTPSRSSLYWALHNFCCRK) constitute a mitochondrion transit peptide.

The protein belongs to the TEFM family. In terms of assembly, interacts with POLRMT.

The protein localises to the mitochondrion matrix. It is found in the mitochondrion nucleoid. Transcription elongation factor which increases mitochondrial RNA polymerase processivity. Regulates transcription of the mitochondrial genome, including genes important for the oxidative phosphorylation machinery. This Homo sapiens (Human) protein is Transcription elongation factor, mitochondrial (TEFM).